The chain runs to 104 residues: Ubiquitin-related modifier 1 homolog (104 aa).

1-thioglycine is present on glycine 104. Glycine 104 is covalently cross-linked (Glycyl lysine isopeptide (Gly-Lys) (interchain with K-? in acceptor proteins)).

The protein belongs to the URM1 family. As to quaternary structure, interacts with cer. C-terminal thiocarboxylation occurs in 2 steps, it is first acyl-adenylated (-COAMP) via the hesA/moeB/thiF part of the MOCS3 homolog, then thiocarboxylated (-COSH) via the rhodanese domain of the MOCS3 homolog.

The protein localises to the cytoplasm. Its pathway is tRNA modification; 5-methoxycarbonylmethyl-2-thiouridine-tRNA biosynthesis. Its function is as follows. Acts as a sulfur carrier required for 2-thiolation of mcm(5)S(2)U at tRNA wobble positions of cytosolic tRNA(Lys), tRNA(Glu) and tRNA(Gln). Serves as sulfur donor in tRNA 2-thiolation reaction by being thiocarboxylated (-COSH) at its C-terminus by MOCS3. The sulfur is then transferred to tRNA to form 2-thiolation of mcm(5)S(2)U. Also acts as a ubiquitin-like protein (UBL) that is covalently conjugated via an isopeptide bond to lysine residues of target proteins such as Prx2/Jafrac1, Ciao1, Eip71CD and GILT1. The thiocarboxylated form serves as substrate for conjugation and oxidative stress specifically induces the formation of UBL-protein conjugates. The polypeptide is Ubiquitin-related modifier 1 homolog (Drosophila grimshawi (Hawaiian fruit fly)).